Consider the following 591-residue polypeptide: NADP-dependent malic enzyme (591 aa).

Basic and acidic residues predominate over residues 1–10 (MESTLKEMRD). Positions 1-26 (MESTLKEMRDGASVLDMDPKSTVGGG) are disordered. Tyrosine 139 functions as the Proton donor in the catalytic mechanism. Arginine 192 contributes to the NAD(+) binding site. Lysine 210 acts as the Proton acceptor in catalysis. A divalent metal cation-binding residues include glutamate 282, aspartate 283, and aspartate 306. Aspartate 306 lines the NAD(+) pocket. NADP(+) is bound at residue 335–351 (LFLGAGEAGTGIAELIA). Asparagine 447 serves as a coordination point for NAD(+).

The protein belongs to the malic enzymes family. As to quaternary structure, homotetramer. It depends on Mg(2+) as a cofactor. The cofactor is Mn(2+). In terms of tissue distribution, mRNA found twofold higher in leaves and stems than in roots.

The protein localises to the cytoplasm. The catalysed reaction is (S)-malate + NADP(+) = pyruvate + CO2 + NADPH. It carries out the reaction oxaloacetate + H(+) = pyruvate + CO2. This Populus trichocarpa (Western balsam poplar) protein is NADP-dependent malic enzyme.